The chain runs to 239 residues: Ribonuclease PH (239 aa).

Residues Arg-86 and 124 to 126 each bind phosphate; that span reads GTR.

This sequence belongs to the RNase PH family. As to quaternary structure, homohexameric ring arranged as a trimer of dimers.

The enzyme catalyses tRNA(n+1) + phosphate = tRNA(n) + a ribonucleoside 5'-diphosphate. In terms of biological role, phosphorolytic 3'-5' exoribonuclease that plays an important role in tRNA 3'-end maturation. Removes nucleotide residues following the 3'-CCA terminus of tRNAs; can also add nucleotides to the ends of RNA molecules by using nucleoside diphosphates as substrates, but this may not be physiologically important. Probably plays a role in initiation of 16S rRNA degradation (leading to ribosome degradation) during starvation. The chain is Ribonuclease PH from Rickettsia akari (strain Hartford).